The following is a 417-amino-acid chain: Serine hydroxymethyltransferase (417 aa).

(6S)-5,6,7,8-tetrahydrofolate-binding positions include Leu-121 and 125-127 (GHL). At Lys-229 the chain carries N6-(pyridoxal phosphate)lysine. 355-357 (SPF) contacts (6S)-5,6,7,8-tetrahydrofolate.

Belongs to the SHMT family. In terms of assembly, homodimer. The cofactor is pyridoxal 5'-phosphate.

It is found in the cytoplasm. It catalyses the reaction (6R)-5,10-methylene-5,6,7,8-tetrahydrofolate + glycine + H2O = (6S)-5,6,7,8-tetrahydrofolate + L-serine. It participates in one-carbon metabolism; tetrahydrofolate interconversion. It functions in the pathway amino-acid biosynthesis; glycine biosynthesis; glycine from L-serine: step 1/1. Catalyzes the reversible interconversion of serine and glycine with tetrahydrofolate (THF) serving as the one-carbon carrier. This reaction serves as the major source of one-carbon groups required for the biosynthesis of purines, thymidylate, methionine, and other important biomolecules. Also exhibits THF-independent aldolase activity toward beta-hydroxyamino acids, producing glycine and aldehydes, via a retro-aldol mechanism. This chain is Serine hydroxymethyltransferase, found in Xylella fastidiosa (strain 9a5c).